The chain runs to 71 residues: uncharacterized protein (71 aa).

The helical transmembrane segment at 5–22 threads the bilayer; sequence VVMCSGLFCSVFAGAFML.

The protein resides in the membrane. This is an uncharacterized protein from Bacillus subtilis (strain 168).